A 240-amino-acid chain; its full sequence is 2,3,4,5-tetrahydropyridine-2,6-dicarboxylate N-acetyltransferase (240 aa).

The protein belongs to the transferase hexapeptide repeat family. DapH subfamily.

It carries out the reaction (S)-2,3,4,5-tetrahydrodipicolinate + acetyl-CoA + H2O = L-2-acetamido-6-oxoheptanedioate + CoA. The protein operates within amino-acid biosynthesis; L-lysine biosynthesis via DAP pathway; LL-2,6-diaminopimelate from (S)-tetrahydrodipicolinate (acetylase route): step 1/3. Functionally, catalyzes the transfer of an acetyl group from acetyl-CoA to tetrahydrodipicolinate. In Bacillus cytotoxicus (strain DSM 22905 / CIP 110041 / 391-98 / NVH 391-98), this protein is 2,3,4,5-tetrahydropyridine-2,6-dicarboxylate N-acetyltransferase.